A 692-amino-acid polypeptide reads, in one-letter code: Elongation factor G (692 aa).

The tr-type G domain maps to 8–282 (EKTRNIGIMA…AIVDYLPAPT (275 aa)). GTP contacts are provided by residues 17 to 24 (AHIDAGKT), 81 to 85 (DTPGH), and 135 to 138 (NKMD).

The protein belongs to the TRAFAC class translation factor GTPase superfamily. Classic translation factor GTPase family. EF-G/EF-2 subfamily.

The protein resides in the cytoplasm. In terms of biological role, catalyzes the GTP-dependent ribosomal translocation step during translation elongation. During this step, the ribosome changes from the pre-translocational (PRE) to the post-translocational (POST) state as the newly formed A-site-bound peptidyl-tRNA and P-site-bound deacylated tRNA move to the P and E sites, respectively. Catalyzes the coordinated movement of the two tRNA molecules, the mRNA and conformational changes in the ribosome. This is Elongation factor G from Pelotomaculum thermopropionicum (strain DSM 13744 / JCM 10971 / SI).